A 167-amino-acid chain; its full sequence is MDQCLLEGYVAGIIDAEASLSVSIKIQEDLRCRVRVDPVFSITQDSKDVLNVVKNYFGCGRLMPKPGQEHLTLYVVDRLEALADCLIPKLDRLPLIVKKRGFEMFREIVLTLTRMKYRRVECCVIRDLVLKSYSLSSLNKKSKRKRSLEEILKIIPCDKAVEPPGER.

Belongs to the LAGLIDADG endonuclease family.

Functionally, endonuclease involved in rRNA intron I-gamma homing. The sequence is that of Homing endonuclease I-ApeII (apeII) from Aeropyrum pernix (strain ATCC 700893 / DSM 11879 / JCM 9820 / NBRC 100138 / K1).